The sequence spans 167 residues: 2-C-methyl-D-erythritol 2,4-cyclodiphosphate synthase (167 aa).

A divalent metal cation is bound by residues aspartate 15 and histidine 17. 4-CDP-2-C-methyl-D-erythritol 2-phosphate is bound by residues 15–17 (DIH) and 43–44 (HS). Histidine 51 contributes to the a divalent metal cation binding site. 4-CDP-2-C-methyl-D-erythritol 2-phosphate contacts are provided by residues 65-67 (DIG), 141-144 (TTNE), and arginine 151.

This sequence belongs to the IspF family. Homotrimer. A divalent metal cation is required as a cofactor.

The enzyme catalyses 4-CDP-2-C-methyl-D-erythritol 2-phosphate = 2-C-methyl-D-erythritol 2,4-cyclic diphosphate + CMP. It participates in isoprenoid biosynthesis; isopentenyl diphosphate biosynthesis via DXP pathway; isopentenyl diphosphate from 1-deoxy-D-xylulose 5-phosphate: step 4/6. Its function is as follows. Involved in the biosynthesis of isopentenyl diphosphate (IPP) and dimethylallyl diphosphate (DMAPP), two major building blocks of isoprenoid compounds. Catalyzes the conversion of 4-diphosphocytidyl-2-C-methyl-D-erythritol 2-phosphate (CDP-ME2P) to 2-C-methyl-D-erythritol 2,4-cyclodiphosphate (ME-CPP) with a corresponding release of cytidine 5-monophosphate (CMP). The polypeptide is 2-C-methyl-D-erythritol 2,4-cyclodiphosphate synthase (Prochlorococcus marinus (strain MIT 9312)).